Consider the following 201-residue polypeptide: Cytochrome c oxidase subunit 3 (201 aa).

Helical transmembrane passes span 25–45 (VLGL…LFAA), 65–85 (LFVP…IHYG), 100–120 (WYWI…YEYL), and 137–157 (VMTG…LGVI).

It belongs to the cytochrome c oxidase subunit 3 family.

The protein localises to the cell membrane. It carries out the reaction 4 Fe(II)-[cytochrome c] + O2 + 8 H(+)(in) = 4 Fe(III)-[cytochrome c] + 2 H2O + 4 H(+)(out). The chain is Cytochrome c oxidase subunit 3 (ctaE) from Thermostichus vulcanus (Synechococcus vulcanus).